The chain runs to 510 residues: NAD(P)H-quinone oxidoreductase subunit 2 B, chloroplastic (510 aa).

A run of 13 helical transmembrane segments spans residues 24–44 (LLLF…GLIL), 57–77 (IPWL…ALLF), 99–119 (IFQF…VEYI), 124–144 (MAIA…MFLC), 149–169 (LITI…LSGY), 183–203 (YLLM…WLYG), 227–247 (PGIS…LSPA), 295–315 (WHLL…LIAI), 323–343 (MLAY…IVGD), 354–374 (YMLF…LFGL), 395–415 (ALSL…AGFF), 418–438 (LHLF…IGLL), and 484–504 (MIVC…IIAI).

The protein belongs to the complex I subunit 2 family. In terms of assembly, NDH is composed of at least 16 different subunits, 5 of which are encoded in the nucleus.

It localises to the plastid. The protein resides in the chloroplast thylakoid membrane. It catalyses the reaction a plastoquinone + NADH + (n+1) H(+)(in) = a plastoquinol + NAD(+) + n H(+)(out). The enzyme catalyses a plastoquinone + NADPH + (n+1) H(+)(in) = a plastoquinol + NADP(+) + n H(+)(out). In terms of biological role, NDH shuttles electrons from NAD(P)H:plastoquinone, via FMN and iron-sulfur (Fe-S) centers, to quinones in the photosynthetic chain and possibly in a chloroplast respiratory chain. The immediate electron acceptor for the enzyme in this species is believed to be plastoquinone. Couples the redox reaction to proton translocation, and thus conserves the redox energy in a proton gradient. This chain is NAD(P)H-quinone oxidoreductase subunit 2 B, chloroplastic, found in Gossypium hirsutum (Upland cotton).